The sequence spans 196 residues: MISLFKKLYFTFSRSSRIIITLVIIDQLTKWWFINNLRWKPGLMLKVTSILNMVYTWNYGISFGLMREYYQYSNAIFLITNMIIVCYLYHLMICSKTIGSFVGYNFVIGGAIGNLIDRFCRGAVFDFIHFHYRNYSFPVFNLADCFITLGVIILIEDYFSTKKVIEETSKENFDNLQIEAMAAKIRNTDHVSNDKI.

Transmembrane regions (helical) follow at residues 43-63 (LMLK…GISF), 75-95 (AIFL…MICS), and 97-117 (TIGS…NLID). Catalysis depends on residues Asp-126 and Asp-144. Residues 135 to 155 (YSFPVFNLADCFITLGVIILI) form a helical membrane-spanning segment.

The protein belongs to the peptidase A8 family.

It localises to the cell inner membrane. It catalyses the reaction Release of signal peptides from bacterial membrane prolipoproteins. Hydrolyzes -Xaa-Yaa-Zaa-|-(S,diacylglyceryl)Cys-, in which Xaa is hydrophobic (preferably Leu), and Yaa (Ala or Ser) and Zaa (Gly or Ala) have small, neutral side chains.. Its pathway is protein modification; lipoprotein biosynthesis (signal peptide cleavage). In terms of biological role, this protein specifically catalyzes the removal of signal peptides from prolipoproteins. The chain is Lipoprotein signal peptidase from Rickettsia typhi (strain ATCC VR-144 / Wilmington).